The sequence spans 1301 residues: MPRPQHHALLRAMLKLLLFASIAEHCATALPTNSSNSPSSPSPFTVASLPPTTASSSSSPAVISTSSFDRNLADLVNPEAETSGSGWESLETEFNLATTVDSSTQKTAKEPVLGTAATSIEQQDQPPDVPATTLAFANAFPVPVAGEMGNGNGNYNDATPPYAAVDDNYVPSKPQNLTILDVSANSITMSWHPPKNQNGAIAGYHVFHIHDNQTGVEIVKNSRNSVETLIHFELQNLRPYTDYRVIVKAFTTKNEGEPSDQIAQRTDVGGPSAPAIVNLTCHSQESITIRWRRPYEFYNTIDFYIIKTRLAGQDTHRDIRINASAKELETAMILQNLTTNSYYEVKVAAATFSVINPKKIVLGKFSESRIIQLQPNCEKLQPLLRQSHNDYNLAVLVGIIFSCFGIILIIMAFFLWSRKCFHAAYYYLDDPPHHPNAPQVDWEVPVKIGDEIRAAVPVNEFAKHVASLHADGDIGFSREYEAIQNECISDDLPCEHSQHPENKRKNRYLNITAYDHSRVHLHPTPGQKKNLDYINANFIDGYQKGHAFIGTQGPLPDTFDCFWRMIWEQRVAIIVMITNLVERGRRKCDMYWPKDGVETYGVIQVKLIEEEVMSTYTVRTLQIKHLKLKKKKQCNTEKLVYQYHYTNWPDHGTPDHPLPVLNFVKKSSAANPAEAGPIVVHCSAGVGRTGTYIVLDAMLKQIQQKNIVNVFGFLRHIRAQRNFLVQTEEQYIFLHDALVEAIASGETNLMAEQVEELKNCTPYLEQQYKNIIQFQPKDIHIASAMKQVNSIKNRGAIFPIEGSRVHLTPKPGEDGSDYINASWLHGFRRLRDFIVTQHPMAHTIKDFWQMVWDHNAQTVVLLSSLDDINFAQFWPDEATPIESDHYRVKFLNKTNKSDYVSRDFVIQSIQDDYELTVKMLHCPSWPEMSNPNSIYDFIVDVHERCNDYRNGPIVIVDRYGGAQACTFCAISSLAIEMEYCSTANVYQYAKLYHNKRPGVWTSSEDIRVIYNILSFLPGNLNLLKRTALRTEFEDVTTATPDLYSKICSNGNVPQHVILQQQQLHMLQLQQQHLETQQQQQQQQQQQQQQQQTALNETVSTPSTDTNPSLLPILSLLPPTVAPLSSSSSTTPPTPSTPTPQPPQTIQLSSHSPSDLSHQISSTVANAASPVTPATASASAGATPTTPMTPTVPPTIPTIPSLASQNSLTLTNANFHTVTNNAADLMEHQQQQMLALMQQQTQLQQQYNTHPQQHHNNVGDLLMNNADNSPTASPTITNNNHITNNNVTSAAATDAQNLDIVG.

Positions 1 to 28 (MPRPQHHALLRAMLKLLLFASIAEHCAT) are cleaved as a signal peptide. The Extracellular portion of the chain corresponds to 29–394 (ALPTNSSNSP…RQSHNDYNLA (366 aa)). Residues 31–63 (PTNSSNSPSSPSPFTVASLPPTTASSSSSPAVI) form a disordered region. A glycan (N-linked (GlcNAc...) asparagine) is linked at Asn-33. The segment covering 33–63 (NSSNSPSSPSPFTVASLPPTTASSSSSPAVI) has biased composition (low complexity). 3 Fibronectin type-III domains span residues 66-165 (SSFD…YAAV), 173-269 (KPQN…TDVG), and 270-376 (GPSA…LQPN). Residues Asn-176, Asn-212, Asn-278, Asn-322, and Asn-336 are each glycosylated (N-linked (GlcNAc...) asparagine). A helical membrane pass occupies residues 395-415 (VLVGIIFSCFGIILIIMAFFL). The Cytoplasmic portion of the chain corresponds to 416 to 1301 (WSRKCFHAAY…TDAQNLDIVG (886 aa)). Tyrosine-protein phosphatase domains are found at residues 476–741 (FSRE…LVEA) and 764–1016 (LEQQ…LSFL). The active-site Phosphocysteine intermediate is Cys-682. The segment covering 1092–1106 (TALNETVSTPSTDTN) has biased composition (polar residues). Disordered regions lie at residues 1092–1199 (TALN…PTIP) and 1257–1281 (VGDL…NNHI). Residues 1107–1130 (PSLLPILSLLPPTVAPLSSSSSTT) show a composition bias toward low complexity. The span at 1131–1142 (PPTPSTPTPQPP) shows a compositional bias: pro residues. Polar residues predominate over residues 1150–1161 (HSPSDLSHQISS). A compositionally biased stretch (low complexity) spans 1162–1188 (TVANAASPVTPATASASAGATPTTPMT). Positions 1264 to 1273 (NADNSPTASP) are enriched in polar residues.

It belongs to the protein-tyrosine phosphatase family. Receptor class subfamily. In terms of tissue distribution, selectively expressed in a subset of axons and pioneer neurons (including aCC and RP2) in the embryo.

Its subcellular location is the membrane. The enzyme catalyses O-phospho-L-tyrosyl-[protein] + H2O = L-tyrosyl-[protein] + phosphate. Its function is as follows. May play a key role in signal transduction and growth control. May have a role in the establishment of the intersegmental and segmental nerves. In Drosophila melanogaster (Fruit fly), this protein is Tyrosine-protein phosphatase 99A (Ptp99A).